Here is an 82-residue protein sequence, read N- to C-terminus: Sec-independent protein translocase protein TatA (82 aa).

The helical transmembrane segment at 1–21 threads the bilayer; sequence MGSFSIWHWLIVLLVVVMIFG. The tract at residues 39–82 is disordered; that stretch reads FKDGMKDGSTTDAPAASSAPAAQVTGQPANSDKSTIDVEARQKS. Over residues 51–60 the composition is skewed to low complexity; sequence APAASSAPAA. Positions 62–71 are enriched in polar residues; that stretch reads VTGQPANSDK. A compositionally biased stretch (basic and acidic residues) spans 72–82; it reads STIDVEARQKS.

This sequence belongs to the TatA/E family. The Tat system comprises two distinct complexes: a TatABC complex, containing multiple copies of TatA, TatB and TatC subunits, and a separate TatA complex, containing only TatA subunits. Substrates initially bind to the TatABC complex, which probably triggers association of the separate TatA complex to form the active translocon.

The protein localises to the cell inner membrane. Its function is as follows. Part of the twin-arginine translocation (Tat) system that transports large folded proteins containing a characteristic twin-arginine motif in their signal peptide across membranes. TatA could form the protein-conducting channel of the Tat system. The polypeptide is Sec-independent protein translocase protein TatA (Variovorax paradoxus (strain S110)).